Consider the following 202-residue polypeptide: Small ribosomal subunit protein uS4c (202 aa).

The 61-residue stretch at 90–150 (MRLDNVIFRL…NQRKSQAIIN (61 aa)) folds into the S4 RNA-binding domain.

This sequence belongs to the universal ribosomal protein uS4 family. As to quaternary structure, part of the 30S ribosomal subunit. Contacts protein S5. The interaction surface between S4 and S5 is involved in control of translational fidelity.

The protein localises to the plastid. The protein resides in the chloroplast. Its function is as follows. One of the primary rRNA binding proteins, it binds directly to 16S rRNA where it nucleates assembly of the body of the 30S subunit. In terms of biological role, with S5 and S12 plays an important role in translational accuracy. This chain is Small ribosomal subunit protein uS4c (rps4), found in Canalohypopterygium tamariscinum (Moss).